The chain runs to 1437 residues: Protein SUPPRESSOR OF npr1-1, CONSTITUTIVE 1 (1437 aa).

Residue M1 is modified to N-acetylmethionine. The TIR domain maps to 19–182 (RRYDVFPSFR…ELAEDVLRKT (164 aa)). Residue 28–33 (RGEDVR) coordinates NAD(+). E93 is an active-site residue. LRR repeat units lie at residues 554-576 (MRNL…VYLP), 577-598 (LKLR…TFKA), 600-621 (YLVN…TLPL), 622-645 (GSLK…SLAI), 647-668 (LEEL…IQNA), 670-691 (KLIY…DLNL), 692-715 (ESLE…KMGC), 781-805 (LGSL…SKAT), 807-828 (LESL…IGNL), 829-851 (HRLV…DVNL), 852-875 (SSLE…STNI), 877-895 (WLYL…IGNL), 897-918 (RLVR…DVNL), 919-939 (SSLE…PLIS), 940-962 (ESIK…SKAT), 964-985 (LKNL…IGNL), 1009-1029 (SSLM…PLIS), 1030-1052 (TNIV…IGNL), 1054-1075 (RLVK…DVNL), 1076-1096 (SSLM…PLIS), 1097-1121 (TRIE…DFTR), 1123-1143 (TVLM…IFRL), and 1161-1185 (LSDA…NIEY).

This sequence belongs to the disease resistance TIR-NB-LRR family. In terms of assembly, homodimer. Interacts (via TIR domain) with TPR1. Interacts with EDS1. Interacts with SRFR1. Interacts with HSP90-3. Binds to MORC1/CRT1. Interacts with TRAF1B. In terms of processing, met-1 is specifically acetylated by N-terminal acetyltransferase complex A (NatA). The NatA-mediated acetylation serves as a degradation signal. Met-1 is specifically acetylated by N-terminal acetyltransferase complex B (NatB). The NatB-mediated acetylation stabilizes SNC1. As to expression, expressed in guard cells and epidermal cells, but not detected in mesophyll cells.

Its subcellular location is the cytoplasm. It is found in the microsome. The protein localises to the nucleus. The catalysed reaction is NAD(+) + H2O = ADP-D-ribose + nicotinamide + H(+). In terms of biological role, disease resistance protein of the TIR-NB-LRR-type. Part of the RPP5 locus that contains a cluster of several paralogous disease resistance (R) genes. Resistance proteins guard the plant against pathogens that contain an appropriate avirulence protein via an indirect interaction with this avirulence protein. That triggers a defense system including the hypersensitive response, which restricts the pathogen growth. Probably acts as a NAD(+) hydrolase (NADase): in response to activation, catalyzes cleavage of NAD(+) into ADP-D-ribose (ADPR) and nicotinamide; NAD(+) cleavage triggering a defense system that promotes cell death. Expression regulated by MOS1 at chromatin level. Nuclear localization of SNC1 is essential for its activity. ABA deficiency can rescue high-temperature inhibition of SNC1-mediated defense responses. The chain is Protein SUPPRESSOR OF npr1-1, CONSTITUTIVE 1 from Arabidopsis thaliana (Mouse-ear cress).